An 868-amino-acid polypeptide reads, in one-letter code: LPS-assembly protein LptD (868 aa).

A signal peptide spans methionine 1–alanine 24.

This sequence belongs to the LptD family. Component of the lipopolysaccharide transport and assembly complex. Interacts with LptE and LptA.

It is found in the cell outer membrane. Its function is as follows. Together with LptE, is involved in the assembly of lipopolysaccharide (LPS) at the surface of the outer membrane. The sequence is that of LPS-assembly protein LptD from Francisella tularensis subsp. tularensis (strain FSC 198).